Consider the following 1103-residue polypeptide: Activity-dependent neuroprotector homeobox protein (1103 aa).

Residues Lys39 and Lys72 each participate in a glycyl lysine isopeptide (Lys-Gly) (interchain with G-Cter in SUMO2) cross-link. The segment at 74–97 (FCCSACPFSSKFFSAYKSHFRNVH) adopts a C2H2-type 1; degenerate zinc-finger fold. Phosphoserine is present on Ser98. A C2H2-type 2; degenerate zinc finger spans residues 107 to 129 (LNCPYCTFNADKKTLETHIKIFH). Positions 133-154 (SSAPSSSLSTFKDKNKNDGLKP) are disordered. The span at 143 to 154 (FKDKNKNDGLKP) shows a compositional bias: basic and acidic residues. Residues Lys144 and Lys155 each participate in a glycyl lysine isopeptide (Lys-Gly) (interchain with G-Cter in SUMO2) cross-link. The C2H2-type 3; degenerate zinc-finger motif lies at 165-188 (YYCKKCTYRDPLYEIVRKHIYREH). Glycyl lysine isopeptide (Lys-Gly) (interchain with G-Cter in SUMO2) cross-links involve residues Lys203, Lys231, Lys266, Lys274, Lys278, Lys279, Lys311, and Lys335. The C2H2-type 4; degenerate zinc finger occupies 221–244 (IHCKRCLFMPKSYEALVQHVIEDH). An Asymmetric dimethylarginine modification is found at Arg348. The segment at 354–361 (NAPVSIPQ) is neuroprotective peptide (NAP). Residues 360-439 (PQQSQSVKQL…PAATGPPPSN (80 aa)) are disordered. Glycyl lysine isopeptide (Lys-Gly) (interchain with G-Cter in SUMO2) cross-links involve residues Lys367 and Lys408. The span at 393–423 (SLQTANTSSLPPGQVKSPSVSQSQASRVLGQ) shows a compositional bias: polar residues. A phosphoserine mark is found at Ser409 and Ser413. Lys427 participates in a covalent cross-link: Glycyl lysine isopeptide (Lys-Gly) (interchain with G-Cter in SUMO2). Over residues 427 to 438 (KPPPAATGPPPS) the composition is skewed to pro residues. The segment at 447-469 (KICTICNELFPENVYSVHFEKEH) adopts a C2H2-type 5; atypical zinc-finger fold. 2 consecutive C2H2-type zinc fingers follow at residues 489-510 (SKCLYCNRYLPTDTLLNHMLIH) and 512-535 (LSCPYCRSTFNDVEKMAAHMRMVH). Residues Lys600 and Lys606 each participate in a glycyl lysine isopeptide (Lys-Gly) (interchain with G-Cter in SUMO2) cross-link. Residue Ser608 is modified to Phosphoserine. Residues Lys616, Lys621, Lys632, and Lys658 each participate in a glycyl lysine isopeptide (Lys-Gly) (interchain with G-Cter in SUMO2) cross-link. Residues 622–647 (TLCPLCFSILKGPISDALAHHLRERH) form a C2H2-type 8; atypical zinc finger. Residues 662-686 (YKCIHCLGVYTSNMTASTITLHLVH) form a C2H2-type 9; atypical zinc finger. The segment at 691–712 (GKTQNGQDKTNAPSRLNQSPGL) is disordered. Residues 692–710 (KTQNGQDKTNAPSRLNQSP) show a composition bias toward polar residues. Residue Lys699 forms a Glycyl lysine isopeptide (Lys-Gly) (interchain with G-Cter in SUMO2) linkage. The residue at position 709 (Ser709) is a Phosphoserine. Glycyl lysine isopeptide (Lys-Gly) (interchain with G-Cter in SUMO2) cross-links involve residues Lys716, Lys728, and Lys731. Ser738 bears the Phosphoserine mark. Residue Lys745 forms a Glycyl lysine isopeptide (Lys-Gly) (interchain with G-Cter in SUMO2) linkage. Positions 754–814 (LDPKGHEDDS…SNKRKKCVRD (61 aa)) form a DNA-binding region, homeobox. Ser805 is subject to Phosphoserine. Glycyl lysine isopeptide (Lys-Gly) (interchain with G-Cter in SUMO2) cross-links involve residues Lys807, Lys829, and Lys835. Positions 873–1029 (DSFSDSFEHL…VQDDTEQLKW (157 aa)) are disordered. A phosphoserine mark is found at Ser876, Ser878, Ser886, Ser889, and Ser905. Residues Lys914, Lys929, and Lys936 each participate in a glycyl lysine isopeptide (Lys-Gly) (interchain with G-Cter in SUMO2) cross-link. Over residues 922–954 (ESEKLDQKEEEDGSKYETIHLTEERAKLMHDAS) the composition is skewed to basic and acidic residues. 2 positions are modified to phosphoserine: Ser954 and Ser956. The segment covering 972–982 (PSESGPGSRQV) has biased composition (polar residues). Lys1017 participates in a covalent cross-link: Glycyl lysine isopeptide (Lys-Gly) (interchain with G-Cter in SUMO2). Lys1036 and Lys1043 each carry N6-acetyllysine; alternate. Glycyl lysine isopeptide (Lys-Gly) (interchain with G-Cter in SUMO2); alternate cross-links involve residues Lys1036 and Lys1043. Positions 1045–1103 (QSQWENASENAERLPNPQIEWQNSTIDSEDGEQFDSMTDGVADPMHGSLTGVKLSSQQA) are disordered. At Ser1072 the chain carries Phosphoserine.

Interacts (via N-terminal region) with beta-catenin/CTNNB1 (via the central armadillo domains); interaction is direct and stabilizes CTNNB1 by modulating its phosphorylation by glycogen synthase kinase-3 beta GSK3B.

It is found in the nucleus. Its subcellular location is the chromosome. Functionally, may be involved in transcriptional regulation. May mediate some of the neuroprotective peptide VIP-associated effects involving normal growth and cancer proliferation. Positively modulates WNT-beta-catenin/CTNN1B signaling, acting by regulating phosphorylation of, and thereby stabilizing, CTNNB1. May be required for neural induction and neuronal differentiation. May be involved in erythroid differentiation. This Rattus norvegicus (Rat) protein is Activity-dependent neuroprotector homeobox protein (Adnp).